We begin with the raw amino-acid sequence, 121 residues long: Large ribosomal subunit protein uL18 (121 aa).

The protein belongs to the universal ribosomal protein uL18 family. Part of the 50S ribosomal subunit; part of the 5S rRNA/L5/L18/L25 subcomplex. Contacts the 5S and 23S rRNAs.

In terms of biological role, this is one of the proteins that bind and probably mediate the attachment of the 5S RNA into the large ribosomal subunit, where it forms part of the central protuberance. This Paraburkholderia phytofirmans (strain DSM 17436 / LMG 22146 / PsJN) (Burkholderia phytofirmans) protein is Large ribosomal subunit protein uL18.